A 1200-amino-acid chain; its full sequence is Metabotropic glycine receptor (1200 aa).

A signal peptide spans 1–24; it reads MGAMAYSLLFCLLLAHLGLGEVGA. The interval 25–62 is disordered; the sequence is SLDPPGRPDSPRERTPRGKQHGQQLPRASAPDPSIPWS. Residues 25–417 are Extracellular-facing; the sequence is SLDPPGRPDS…CFVQEDKYLR (393 aa). The cache-like region stretch occupies residues 85 to 281; sequence YLYTGDFHQL…CENGSYKPGW (197 aa). Asn-98 and Asn-143 each carry an N-linked (GlcNAc...) asparagine glycan. Cysteines 99 and 272 form a disulfide. Glycine-binding residues include Ser-172 and Arg-173. Asn-215 is a glycosylation site (N-linked (GlcNAc...) asparagine). Positions 234–253 are disordered; the sequence is LHRRGSNQGPRGLGHSWRRR. Glu-271 provides a ligand contact to glycine. N-linked (GlcNAc...) asparagine glycosylation is present at Asn-274. Asp-307 provides a ligand contact to glycine. Asn-333 is a glycosylation site (N-linked (GlcNAc...) asparagine). A helical transmembrane segment spans residues 418-439; that stretch reads LAIISFQALCMLLDFVSMLVVY. The Cytoplasmic portion of the chain corresponds to 440–451; that stretch reads HFRKAKSIRASG. The helical transmembrane segment at 452 to 474 threads the bilayer; it reads LILLETILFGSLLLYFPVVILYF. At 475–478 the chain is on the extracellular side; sequence EPST. The chain crosses the membrane as a helical span at residues 479 to 501; sequence FRCILLRWARLLGFATVYGTVTL. Cysteines 481 and 573 form a disulfide. The Cytoplasmic segment spans residues 502–525; that stretch reads KLHRVLKVFLSRTAQRIPYMTGGR. Residues 526–547 form a helical membrane-spanning segment; the sequence is VMRMLAVIVLVVFWFLVGWTSS. Residues 548-576 lie on the Extracellular side of the membrane; that stretch reads MCQNLERDILLVGQGQTSDHLTFNMCLID. The chain crosses the membrane as a helical span at residues 577–597; sequence RWDYMTAVAEFLFLLWGIYLC. Residues 598-611 are Cytoplasmic-facing; sequence YAVRTVPSAFHEPR. A helical transmembrane segment spans residues 612 to 633; it reads YMAVAVHNELIITAIFHTIRFV. Over 634–642 the chain is Extracellular; sequence LASRLQPDW. The helical transmembrane segment at 643 to 664 threads the bilayer; that stretch reads MLMLYFAHAHLTVTVTIGLLLI. At 665 to 1200 the chain is on the cytoplasmic side; it reads PKFSHSSNNP…SANKIPGPQK (536 aa). Phosphoserine occurs at positions 694, 705, and 708. Positions 757 to 875 are disordered; that stretch reads RITEIPETVS…EAESTESVPL (119 aa). 2 stretches are compositionally biased toward basic and acidic residues: residues 769-781 and 819-828; these read CSKEDKEGTDHSA and STYDHVRDQT. Lys-774 is covalently cross-linked (Glycyl lysine isopeptide (Lys-Gly) (interchain with G-Cter in ubiquitin)). Residues 845 to 856 are compositionally biased toward low complexity; it reads ENSTLESLSSKK. Ser-865 and Ser-944 each carry phosphoserine. The interval 947–988 is disordered; the sequence is DNVETIPNSGHMEEPRKPQKSGIMKQQRVSLPTANPDVSSGI. Over residues 973–988 the composition is skewed to polar residues; it reads QRVSLPTANPDVSSGI. The short motif at 1000–1004 is the VCPWE motif 1 element; sequence VCPWE. At Ser-1059 the chain carries Phosphoserine. Residues 1065 to 1069 carry the VCPWE motif 2 motif; the sequence is VCPWE. Residue Ser-1074 is modified to Phosphoserine. The disordered stretch occupies residues 1130–1160; sequence QMGDQEKQTSSSVDIIPGSCNSSNNSHQPLT. Residues 1165–1169 carry the VCPWE motif 3 motif; sequence VCPWE. Residues 1177–1200 are disordered; it reads NAERSVTLPASSALSANKIPGPQK. The span at 1178 to 1191 shows a compositional bias: polar residues; it reads AERSVTLPASSALS.

The protein belongs to the G-protein coupled receptor 3 family. Homodimer. Associates with the RGS7-GNB5 complex, promoting its localization to the cell membrane and regulating its GTPase activator activity. Interacts (via VCPWE motifs) with GNAO1. Interacts with GPC4. Interacts with EGFLAM. In terms of tissue distribution, highly expressed in brain. Expressed in several brain regions including the cerebral cortex, hippocampus, cerebellum and caudate putamen. Only expressed in neurons, and not in microglia, oligodendrocytes or astrocytes. Expressed in the visual center of the cerebral cortex. Also expressed in the eye, including photoreceptors, ganglion cells and trabecular meshwork.

It localises to the cell membrane. It is found in the postsynaptic cell membrane. Its subcellular location is the presynaptic cell membrane. The protein resides in the nucleus. Its function is as follows. Metabotropic receptor for glycine that controls synapse formation and function in the brain. Acts as an atypical G-protein coupled receptor that recruits and regulates the RGS7-GNB5 complex instead of activating G proteins. In absence of glycine ligand, promotes the GTPase activator activity of RGS7, increasing the GTPase activity of G protein alpha subunits, thereby driving them into their inactive GDP-bound form. Glycine-binding changes the conformation of the intracellular surface, inhibiting the GTPase activator activity of the RGS7-GNB5 complex, promoting G protein alpha subunits into their active GTP-bound form and regulating cAMP levels. Also able to bind taurine, a compound closely related to glycine, but with a two-fold lower affinity. Glycine receptor-dependent regulation of cAMP controls key ion channels, kinases and neurotrophic factors involved in neuronal excitability and synaptic transmission. Plays a pivotal role in regulating mood and cognition via its ability to regulate neuronal excitability in L2/L3 pyramidal neurons of the prefrontal cortex. Also involved in spatial learning by regulating hippocampal CA1 neuronal excitability. Acts as a synaptic organizer in the hippocampus, required for proper mossy fiber-CA3 neurocircuitry establishment, structure and function: induces presynaptic differentiation in contacting axons via its interaction with GPC4. In addition to glycine, may also act as a receptor for osteocalcin (Bglap or Bglap2) hormone: osteocalcin-binding initiates a signaling response that prevents neuronal apoptosis in the hippocampus and regulates the synthesis of neurotransmitters. This is Metabotropic glycine receptor from Mus musculus (Mouse).